The sequence spans 341 residues: Tetraacyldisaccharide 4'-kinase (341 aa).

57–64 (TVGGTGKT) contributes to the ATP binding site.

This sequence belongs to the LpxK family.

It carries out the reaction a lipid A disaccharide + ATP = a lipid IVA + ADP + H(+). It functions in the pathway glycolipid biosynthesis; lipid IV(A) biosynthesis; lipid IV(A) from (3R)-3-hydroxytetradecanoyl-[acyl-carrier-protein] and UDP-N-acetyl-alpha-D-glucosamine: step 6/6. Its function is as follows. Transfers the gamma-phosphate of ATP to the 4'-position of a tetraacyldisaccharide 1-phosphate intermediate (termed DS-1-P) to form tetraacyldisaccharide 1,4'-bis-phosphate (lipid IVA). This Maricaulis maris (strain MCS10) (Caulobacter maris) protein is Tetraacyldisaccharide 4'-kinase.